We begin with the raw amino-acid sequence, 170 residues long: Guided entry of tail-anchored proteins factor 1 (170 aa).

Residues 1-6 (MAAGFN) are Lumenal-facing. Residues 7–27 (WFLVLSSVFLCNLVKTFLPSI) form a helical membrane-spanning segment. The Cytoplasmic segment spans residues 28–96 (SSFLSKIFHK…KSRTAQQAKM (69 aa)). An interaction with GET3/TRC40 region spans residues 35–93 (FHKDADQEMEMRTEIQNMKMELSTISMMDEFARYARLERKINKMTDQLKTLVKSRTAQQ). A coiled-coil region spans residues 61–91 (MMDEFARYARLERKINKMTDQLKTLVKSRTA). Residues 97–117 (KWIVNIAFYILQAALMISLIL) traverse the membrane as a helical segment. The Lumenal segment spans residues 118–137 (KYYADPVTVVPSKWIAPLER). The chain crosses the membrane as a helical span at residues 138–158 (LVAFPSGVAGGVGITCWLVVC). The Cytoplasmic portion of the chain corresponds to 159–170 (NKVVALILQAVS).

The protein belongs to the WRB/GET1 family. Component of the Golgi to ER traffic (GET) complex, which is composed of GET1/WRB, CAMLG/GET2 and GET3/TRC40. Within the complex, GET1 and CAMLG form a heterotetramer which is stabilized by phosphatidylinositol binding and which binds to the GET3 homodimer.

The protein resides in the endoplasmic reticulum membrane. Required for the post-translational delivery of tail-anchored (TA) proteins to the endoplasmic reticulum (ER). Together with CAMLG/GET2, acts as a membrane receptor for soluble GET3/TRC40, which recognizes and selectively binds the transmembrane domain of TA proteins in the cytosol. Required to ensure correct topology and ER insertion of CAMLG. This chain is Guided entry of tail-anchored proteins factor 1, found in Danio rerio (Zebrafish).